Reading from the N-terminus, the 161-residue chain is RNA pyrophosphohydrolase (161 aa).

One can recognise a Nudix hydrolase domain in the interval 12–154 (PYRIGVGMVI…KRKLYKAVIN (143 aa)). Residues 46 to 67 (GGIILGETYSKAVLREMKEEIG) carry the Nudix box motif.

The protein belongs to the Nudix hydrolase family. RppH subfamily. It depends on a divalent metal cation as a cofactor.

Functionally, accelerates the degradation of transcripts by removing pyrophosphate from the 5'-end of triphosphorylated RNA, leading to a more labile monophosphorylated state that can stimulate subsequent ribonuclease cleavage. This chain is RNA pyrophosphohydrolase, found in Orientia tsutsugamushi (strain Boryong) (Rickettsia tsutsugamushi).